We begin with the raw amino-acid sequence, 234 residues long: 2,3-bisphosphoglycerate-dependent phosphoglycerate mutase (234 aa).

Substrate-binding positions include 8 to 15 (RHGESVWN), 21 to 22 (TG), Arg60, 87 to 90 (ERHY), Lys98, 114 to 115 (RR), and 183 to 184 (GN). His9 functions as the Tele-phosphohistidine intermediate in the catalytic mechanism. Glu87 (proton donor/acceptor) is an active-site residue.

It belongs to the phosphoglycerate mutase family. BPG-dependent PGAM subfamily. As to quaternary structure, homodimer.

The catalysed reaction is (2R)-2-phosphoglycerate = (2R)-3-phosphoglycerate. It participates in carbohydrate degradation; glycolysis; pyruvate from D-glyceraldehyde 3-phosphate: step 3/5. Functionally, catalyzes the interconversion of 2-phosphoglycerate and 3-phosphoglycerate. In Citrifermentans bemidjiense (strain ATCC BAA-1014 / DSM 16622 / JCM 12645 / Bem) (Geobacter bemidjiensis), this protein is 2,3-bisphosphoglycerate-dependent phosphoglycerate mutase.